Reading from the N-terminus, the 158-residue chain is 6,7-dimethyl-8-ribityllumazine synthase (158 aa).

Residues F18, 50-52, and 74-76 each bind 5-amino-6-(D-ribitylamino)uracil; these read SYD and AVI. Position 79 to 80 (79 to 80) interacts with (2S)-2-hydroxy-3-oxobutyl phosphate; that stretch reads ET. H82 (proton donor) is an active-site residue. A 5-amino-6-(D-ribitylamino)uracil-binding site is contributed by L107. R122 contributes to the (2S)-2-hydroxy-3-oxobutyl phosphate binding site.

Belongs to the DMRL synthase family.

It carries out the reaction (2S)-2-hydroxy-3-oxobutyl phosphate + 5-amino-6-(D-ribitylamino)uracil = 6,7-dimethyl-8-(1-D-ribityl)lumazine + phosphate + 2 H2O + H(+). It participates in cofactor biosynthesis; riboflavin biosynthesis; riboflavin from 2-hydroxy-3-oxobutyl phosphate and 5-amino-6-(D-ribitylamino)uracil: step 1/2. Functionally, catalyzes the formation of 6,7-dimethyl-8-ribityllumazine by condensation of 5-amino-6-(D-ribitylamino)uracil with 3,4-dihydroxy-2-butanone 4-phosphate. This is the penultimate step in the biosynthesis of riboflavin. The sequence is that of 6,7-dimethyl-8-ribityllumazine synthase from Sulfolobus acidocaldarius (strain ATCC 33909 / DSM 639 / JCM 8929 / NBRC 15157 / NCIMB 11770).